We begin with the raw amino-acid sequence, 249 residues long: Ribosomal RNA small subunit methyltransferase J (249 aa).

S-adenosyl-L-methionine contacts are provided by residues 101 to 102, 117 to 118, 153 to 154, and Asp-171; these read RD, ER, and SS.

Belongs to the methyltransferase superfamily. RsmJ family.

It localises to the cytoplasm. It carries out the reaction guanosine(1516) in 16S rRNA + S-adenosyl-L-methionine = N(2)-methylguanosine(1516) in 16S rRNA + S-adenosyl-L-homocysteine + H(+). In terms of biological role, specifically methylates the guanosine in position 1516 of 16S rRNA. This is Ribosomal RNA small subunit methyltransferase J from Salmonella arizonae (strain ATCC BAA-731 / CDC346-86 / RSK2980).